The sequence spans 186 residues: Ran guanine nucleotide release factor (186 aa).

The interval 27 to 70 (DLRPVPDHQEVFCHRVTDQSLIVELLELQAHVQGEEAARYHFED) is interaction with RAN.

The protein belongs to the MOG1 family. As to quaternary structure, monomer. Interacts with RAN, both RAN-GTP and RAN-GDP. Competes with RCC1 for a common binding site on RAN and thereby inhibits RCC1-mediated nucleotide exchange. Forms a complex with RAN-GTP and RANBP1. Interacts with the cytoplasmic loop 2 of SCN5A.

It localises to the nucleus. Its subcellular location is the cytoplasm. The protein localises to the perinuclear region. The protein resides in the cell membrane. Functionally, may regulate the intracellular trafficking of RAN. Promotes guanine nucleotide release from RAN and inhibits binding of new GTP by preventing the binding of the RAN guanine nucleotide exchange factor RCC1. Regulates the levels of GTP-bound RAN in the nucleus, and thereby plays a role in the regulation of RAN-dependent mitotic spindle dynamics. Enhances the expression of SCN5A at the cell membrane in cardiomyocytes. The sequence is that of Ran guanine nucleotide release factor (RANGRF) from Bos taurus (Bovine).